Here is a 251-residue protein sequence, read N- to C-terminus: Imidazole glycerol phosphate synthase subunit HisF (251 aa).

Catalysis depends on residues Asp-11 and Asp-130.

Belongs to the HisA/HisF family. As to quaternary structure, heterodimer of HisH and HisF.

It is found in the cytoplasm. It carries out the reaction 5-[(5-phospho-1-deoxy-D-ribulos-1-ylimino)methylamino]-1-(5-phospho-beta-D-ribosyl)imidazole-4-carboxamide + L-glutamine = D-erythro-1-(imidazol-4-yl)glycerol 3-phosphate + 5-amino-1-(5-phospho-beta-D-ribosyl)imidazole-4-carboxamide + L-glutamate + H(+). It participates in amino-acid biosynthesis; L-histidine biosynthesis; L-histidine from 5-phospho-alpha-D-ribose 1-diphosphate: step 5/9. IGPS catalyzes the conversion of PRFAR and glutamine to IGP, AICAR and glutamate. The HisF subunit catalyzes the cyclization activity that produces IGP and AICAR from PRFAR using the ammonia provided by the HisH subunit. The chain is Imidazole glycerol phosphate synthase subunit HisF from Chlorobaculum tepidum (strain ATCC 49652 / DSM 12025 / NBRC 103806 / TLS) (Chlorobium tepidum).